We begin with the raw amino-acid sequence, 80 residues long: Acyl carrier protein (80 aa).

The 76-residue stretch at 2-77 (SDIEQRVKKI…QAIDYAKAHV (76 aa)) folds into the Carrier domain. The residue at position 37 (Ser-37) is an O-(pantetheine 4'-phosphoryl)serine.

Belongs to the acyl carrier protein (ACP) family. 4'-phosphopantetheine is transferred from CoA to a specific serine of apo-ACP by AcpS. This modification is essential for activity because fatty acids are bound in thioester linkage to the sulfhydryl of the prosthetic group.

Its subcellular location is the cytoplasm. Its pathway is lipid metabolism; fatty acid biosynthesis. Carrier of the growing fatty acid chain in fatty acid biosynthesis. The sequence is that of Acyl carrier protein from Herminiimonas arsenicoxydans.